The sequence spans 150 residues: Protein-export protein SecB (150 aa).

This sequence belongs to the SecB family. Homotetramer, a dimer of dimers. One homotetramer interacts with 1 SecA dimer.

The protein localises to the cytoplasm. One of the proteins required for the normal export of preproteins out of the cell cytoplasm. It is a molecular chaperone that binds to a subset of precursor proteins, maintaining them in a translocation-competent state. It also specifically binds to its receptor SecA. The sequence is that of Protein-export protein SecB from Psychrobacter cryohalolentis (strain ATCC BAA-1226 / DSM 17306 / VKM B-2378 / K5).